A 285-amino-acid polypeptide reads, in one-letter code: Phosphatidylglycerol--prolipoprotein diacylglyceryl transferase (285 aa).

The next 4 membrane-spanning stretches (helical) occupy residues 30 to 50, 67 to 87, 103 to 123, and 129 to 149; these read LEIR…HWHI, LMLW…ILLY, WHGG…VSIV, and VRVM…LFLG. Residue Arg150 participates in a 1,2-diacyl-sn-glycero-3-phospho-(1'-sn-glycerol) binding. A run of 3 helical transmembrane segments spans residues 184 to 204, 213 to 233, and 252 to 272; these read SQVY…SILA, FGVL…AVEF, and GQVL…LTVL.

The protein belongs to the Lgt family.

The protein localises to the cell inner membrane. The enzyme catalyses L-cysteinyl-[prolipoprotein] + a 1,2-diacyl-sn-glycero-3-phospho-(1'-sn-glycerol) = an S-1,2-diacyl-sn-glyceryl-L-cysteinyl-[prolipoprotein] + sn-glycerol 1-phosphate + H(+). It functions in the pathway protein modification; lipoprotein biosynthesis (diacylglyceryl transfer). In terms of biological role, catalyzes the transfer of the diacylglyceryl group from phosphatidylglycerol to the sulfhydryl group of the N-terminal cysteine of a prolipoprotein, the first step in the formation of mature lipoproteins. The sequence is that of Phosphatidylglycerol--prolipoprotein diacylglyceryl transferase from Anaplasma marginale (strain Florida).